The chain runs to 257 residues: Auxin-responsive protein IAA17 (257 aa).

Disordered stretches follow at residues 1 to 51 (MSPP…PAAT) and 85 to 119 (GKKA…QVVG). An EAR-like (transcriptional repression) motif is present at residues 33–37 (LRLGL). A compositionally biased stretch (low complexity) spans 105–118 (AAAPQAPAAKAQVV). One can recognise a PB1 domain in the interval 151–239 (FLYVKVSMDG…SCRRLRIMKG (89 aa)).

Belongs to the Aux/IAA family. Homodimers and heterodimers. In terms of tissue distribution, highly expressed in etiolated seedlings and flowers. Expressed in roots and green seedlings.

The protein resides in the nucleus. In terms of biological role, aux/IAA proteins are short-lived transcriptional factors that function as repressors of early auxin response genes at low auxin concentrations. This Oryza sativa subsp. japonica (Rice) protein is Auxin-responsive protein IAA17 (IAA17).